The primary structure comprises 344 residues: MTETLTIRRPDDWHLHFRDGAMMRGVVPYTARQFARAIVMPNLTPPVTTTALGAAYRERILAAVPEGVDFRPLMTAYLTDETDADDLIDGYTHGVFTAAKLYPANATTNSASGVTDVEALYPVFERMAAAGMVLCIHGEVTDADVDVFDREKEFIERTMAPLHAAIPALKIAFEHITTSDAVDFVVGANDNIGATITPQHLHINRNAMLVGGIQPHNYCLPVAKRETHRLALRQAATSGPPKFFLGTDSAPHEKHTKESACGCAGIFGAPYALESYLAVFEEEDALDKFEAFASLNGPAFYGLPVNDETITLERVPHNVPDSLETEGGKVVPFHAGQELNWRLK.

2 residues coordinate Zn(2+): histidine 14 and histidine 16. Residues 16–18 (HFR) and asparagine 42 each bind substrate. Positions 100, 137, and 175 each coordinate Zn(2+). An N6-carboxylysine modification is found at lysine 100. Histidine 137 is a substrate binding site. Residue leucine 220 participates in substrate binding. Position 248 (aspartate 248) interacts with Zn(2+). Aspartate 248 is a catalytic residue. Substrate contacts are provided by histidine 252 and alanine 264.

It belongs to the metallo-dependent hydrolases superfamily. DHOase family. Class II DHOase subfamily. Homodimer. It depends on Zn(2+) as a cofactor.

The enzyme catalyses (S)-dihydroorotate + H2O = N-carbamoyl-L-aspartate + H(+). Its pathway is pyrimidine metabolism; UMP biosynthesis via de novo pathway; (S)-dihydroorotate from bicarbonate: step 3/3. In terms of biological role, catalyzes the reversible cyclization of carbamoyl aspartate to dihydroorotate. This is Dihydroorotase from Erythrobacter litoralis (strain HTCC2594).